Here is a 199-residue protein sequence, read N- to C-terminus: Chaperone protein TorD (199 aa).

This sequence belongs to the TorD/DmsD family. TorD subfamily.

The protein resides in the cytoplasm. Involved in the biogenesis of TorA. Acts on TorA before the insertion of the molybdenum cofactor and, as a result, probably favors a conformation of the apoenzyme that is competent for acquiring the cofactor. The protein is Chaperone protein TorD of Escherichia coli (strain ATCC 8739 / DSM 1576 / NBRC 3972 / NCIMB 8545 / WDCM 00012 / Crooks).